A 382-amino-acid polypeptide reads, in one-letter code: Chaperone protein DnaJ (382 aa).

The 66-residue stretch at 5-70 (DYYEVLGVSR…DKKAAYDRYG (66 aa)) folds into the J domain. The segment at 141 to 219 (GVQKTINVPA…CHGAGRVEKE (79 aa)) adopts a CR-type zinc-finger fold. Positions 154, 157, 171, 174, 193, 196, 207, and 210 each coordinate Zn(2+). 4 CXXCXGXG motif repeats span residues 154–161 (CDSCKGTG), 171–178 (CPTCSGMG), 193–200 (CPTCNGMG), and 207–214 (CKSCHGAG).

Belongs to the DnaJ family. As to quaternary structure, homodimer. Zn(2+) serves as cofactor.

The protein localises to the cytoplasm. Its function is as follows. Participates actively in the response to hyperosmotic and heat shock by preventing the aggregation of stress-denatured proteins and by disaggregating proteins, also in an autonomous, DnaK-independent fashion. Unfolded proteins bind initially to DnaJ; upon interaction with the DnaJ-bound protein, DnaK hydrolyzes its bound ATP, resulting in the formation of a stable complex. GrpE releases ADP from DnaK; ATP binding to DnaK triggers the release of the substrate protein, thus completing the reaction cycle. Several rounds of ATP-dependent interactions between DnaJ, DnaK and GrpE are required for fully efficient folding. Also involved, together with DnaK and GrpE, in the DNA replication of plasmids through activation of initiation proteins. The chain is Chaperone protein DnaJ from Cereibacter sphaeroides (strain ATCC 17025 / ATH 2.4.3) (Rhodobacter sphaeroides).